The following is a 540-amino-acid chain: DEAD-box ATP-dependent RNA helicase 57 (540 aa).

The segment at 24-73 (DFARFRQGPPAPDVASAAAPSPEKKRKRQSKAKAKKSKKRRAEGADSASD) is disordered. A compositionally biased stretch (basic residues) spans 47-64 (KKRKRQSKAKAKKSKKRR). Residues 101–129 (KSEDSEVVRRRKEVEREIERAAILRKKFD) adopt a coiled-coil conformation. The Q motif signature appears at 146–174 (ELVSRYGCDSYLVGNLSKLGFQEPTPIQR). Residues 177–347 (IPILLSGREC…RTIMHDAVRV (171 aa)) enclose the Helicase ATP-binding domain. Position 190–197 (190–197 (APTGSGKT)) interacts with ATP. The short motif at 294–297 (DESD) is the DEAD box element. A Helicase C-terminal domain is found at 375–519 (ALRQSFAESL…EVPSWIKALP (145 aa)).

The protein belongs to the DEAD box helicase family. DDX52/ROK1 subfamily.

The enzyme catalyses ATP + H2O = ADP + phosphate + H(+). In Oryza sativa subsp. japonica (Rice), this protein is DEAD-box ATP-dependent RNA helicase 57.